The following is a 98-amino-acid chain: DNA-binding protein Fis (98 aa).

Positions 74–93 (QTRAATMMGINRGTLRKKLK) form a DNA-binding region, H-T-H motif.

It belongs to the transcriptional regulatory Fis family. As to quaternary structure, homodimer.

Functionally, activates ribosomal RNA transcription. Plays a direct role in upstream activation of rRNA promoters. The protein is DNA-binding protein Fis of Photobacterium profundum (strain SS9).